The chain runs to 225 residues: Transcription factor MYB1 (225 aa).

2 HTH myb-type domains span residues 11–67 (LGRV…KPSI) and 68–118 (KRGH…YKKH). 2 consecutive DNA-binding regions (H-T-H motif) follow at residues 39–63 (WKRV…LNYL) and 91–114 (WSLI…NTHL).

In terms of assembly, no interactions with bHLH.

The protein localises to the nucleus. In terms of biological role, activates DODA1 and CYP76AD1 in the betalain red pigment pathway. This is Transcription factor MYB1 from Beta vulgaris (Sugar beet).